The following is a 478-amino-acid chain: Tubulin gamma chain (478 aa).

141–147 contacts GTP; the sequence is AGGTGSG. The interval 451–478 is disordered; sequence ISQKESSSLANENGNGANNKPGKSAMAL. A compositionally biased stretch (polar residues) spans 459–468; sequence LANENGNGAN.

The protein belongs to the tubulin family.

It is found in the cytoplasm. Its subcellular location is the cytoskeleton. The protein resides in the microtubule organizing center. The protein localises to the centrosome. Tubulin is the major constituent of microtubules. The gamma chain is found at microtubule organizing centers (MTOC) such as the spindle poles or the centrosome, suggesting that it is involved in the minus-end nucleation of microtubule assembly. The polypeptide is Tubulin gamma chain (Reticulomyxa filosa).